A 274-amino-acid polypeptide reads, in one-letter code: NH(3)-dependent NAD(+) synthetase (274 aa).

An ATP-binding site is contributed by 46–53 (GISGGQDS). Asp52 provides a ligand contact to Mg(2+). Position 140 (Arg140) interacts with deamido-NAD(+). Position 160 (Thr160) interacts with ATP. Glu165 provides a ligand contact to Mg(2+). Residues Lys173 and Asp180 each contribute to the deamido-NAD(+) site. Lys189 and Thr211 together coordinate ATP. Deamido-NAD(+) is bound at residue 260–261 (HK).

This sequence belongs to the NAD synthetase family. As to quaternary structure, homodimer.

It carries out the reaction deamido-NAD(+) + NH4(+) + ATP = AMP + diphosphate + NAD(+) + H(+). The protein operates within cofactor biosynthesis; NAD(+) biosynthesis; NAD(+) from deamido-NAD(+) (ammonia route): step 1/1. Catalyzes the ATP-dependent amidation of deamido-NAD to form NAD. Uses ammonia as a nitrogen source. The polypeptide is NH(3)-dependent NAD(+) synthetase (Rhodococcus erythropolis (strain PR4 / NBRC 100887)).